A 192-amino-acid polypeptide reads, in one-letter code: Ion-translocating oxidoreductase complex subunit A (192 aa).

Helical transmembrane passes span 5–25, 39–59, 65–85, 102–122, 134–154, and 171–191; these read LLLLISTVLVNNFVLVKFLGL, IGMSMATTFVLTLASILSYLV, LPFDLSYLRTMSFILVIAVVV, ALGIYLPLITTNCAVLGVALL, AIYGFGAAVGFSLVLILFSAM, and AIAMITAGLMSLAFMGFTGLV.

Belongs to the NqrDE/RnfAE family. The complex is composed of six subunits: RnfA, RnfB, RnfC, RnfD, RnfE and RnfG.

The protein resides in the cell inner membrane. Part of a membrane-bound complex that couples electron transfer with translocation of ions across the membrane. The sequence is that of Ion-translocating oxidoreductase complex subunit A from Shewanella sp. (strain ANA-3).